The chain runs to 607 residues: MYSKLMFFFALCSISFLFTSEAASTMLLESSYLPLNQSYAPGFLYKRDMLPPPLQAVLTYTCPEPRPLAEESYNDLLRAISQKSSSDFQNAYSLALSFSSDFYQHGLKTLKDVSFLAVEKFLWGLTRLWSSLILASFSALWWLVSNFTTPVFCLALLYTVTKYMVKTVSFLFGGLPIWIISIAFSLLKKSFSALRSTPKCLYEKAIDGFKSFTIPQSPPKSCVIPITHASGNHAGYASCIKLYNGENALMTATHVLRDCPNAVAVSAKGLKTRIPLAEFKTIAKSDKGDVTLLRGPPNWEGLLGCKAANVITAANLAKCKASIYSFDRDGWVSSYAEIVGSEGTDVMVLSHTEGGHSGSPYFNGKTILGVHSGASATGNYNLMAPIPSLPGLTSPTYVFETTAPQGRVFAQEDIAEIEGLYAQVMKRVQQAEDFKPKTGKYWGDMEDDEDIFFESKEDLSGNGVRGTVRGTNGEGSSTPKTSNVDGKEMMEKIISSLVGKINLENIERKVIEEISAKAMKTPKSRRRRAPKKQPESSKDTSPRSTTGKYQPPHVRSPASVTAANCPNTTTPSKKKNLAGGRPSSGTIPRWVRKQAASAGPSSAPKQN.

Positions 1-22 (MYSKLMFFFALCSISFLFTSEA) are cleaved as a signal peptide. Transmembrane regions (helical) follow at residues 115-135 (FLAV…LILA), 137-157 (FSAL…LALL), and 167-187 (TVSF…FSLL). Residues 206–400 (IDGFKSFTIP…GLTSPTYVFE (195 aa)) form the Peptidase S39 domain. Catalysis depends on for protease activity residues H254, D289, and S357. Disordered regions lie at residues 457–485 (EDLS…SNVD) and 517–607 (KAMK…PKQN). The span at 474-484 (EGSSTPKTSNV) shows a compositional bias: polar residues. A compositionally biased stretch (basic residues) spans 520 to 531 (KTPKSRRRRAPK). Over residues 532-541 (KQPESSKDTS) the composition is skewed to basic and acidic residues. The span at 558 to 571 (ASVTAANCPNTTTP) shows a compositional bias: polar residues.

The protein belongs to the peptidase S39B family. Post-translationally, specific enzymatic cleavages in vivo yield mature proteins. The protease probably cleaves itself and releases the VPg protein.

Its subcellular location is the membrane. Precursor from which the VPg molecule is probably released at the onset of the RNA synthesis. Essential for virus replication. In Turnip yellows virus (isolate FL-1) (TuYV), this protein is Protein P1.